The following is a 240-amino-acid chain: tRNA pseudouridine synthase A (240 aa).

The active-site Nucleophile is the Asp52. Residue Tyr110 coordinates substrate.

This sequence belongs to the tRNA pseudouridine synthase TruA family. Homodimer.

The catalysed reaction is uridine(38/39/40) in tRNA = pseudouridine(38/39/40) in tRNA. In terms of biological role, formation of pseudouridine at positions 38, 39 and 40 in the anticodon stem and loop of transfer RNAs. The sequence is that of tRNA pseudouridine synthase A from Solibacter usitatus (strain Ellin6076).